The following is a 343-amino-acid chain: UDP-3-O-(3-hydroxymyristoyl)glucosamine N-acyltransferase (343 aa).

The Proton acceptor role is filled by His239.

It belongs to the transferase hexapeptide repeat family. LpxD subfamily. As to quaternary structure, homotrimer.

It carries out the reaction a UDP-3-O-[(3R)-3-hydroxyacyl]-alpha-D-glucosamine + a (3R)-hydroxyacyl-[ACP] = a UDP-2-N,3-O-bis[(3R)-3-hydroxyacyl]-alpha-D-glucosamine + holo-[ACP] + H(+). The catalysed reaction is UDP-3-O-[(3R)-3-hydroxytetradecanoyl]-alpha-D-glucosamine + (3R)-hydroxytetradecanoyl-[ACP] = UDP-2-N,3-O-bis[(3R)-3-hydroxytetradecanoyl]-alpha-D-glucosamine + holo-[ACP] + H(+). It participates in glycolipid biosynthesis; lipid IV(A) biosynthesis; lipid IV(A) from (3R)-3-hydroxytetradecanoyl-[acyl-carrier-protein] and UDP-N-acetyl-alpha-D-glucosamine: step 3/6. In terms of biological role, catalyzes the N-acylation of UDP-3-O-(hydroxytetradecanoyl)glucosamine using 3-hydroxytetradecanoyl-ACP as the acyl donor. Is involved in the biosynthesis of lipid A, a phosphorylated glycolipid that anchors the lipopolysaccharide to the outer membrane of the cell. This is UDP-3-O-(3-hydroxymyristoyl)glucosamine N-acyltransferase from Blochmanniella pennsylvanica (strain BPEN).